Consider the following 294-residue polypeptide: 4-hydroxy-tetrahydrodipicolinate synthase (294 aa).

Thr47 provides a ligand contact to pyruvate. The Proton donor/acceptor role is filled by Tyr135. The active-site Schiff-base intermediate with substrate is the Lys163. Thr205 provides a ligand contact to pyruvate.

This sequence belongs to the DapA family. In terms of assembly, homotetramer; dimer of dimers.

The protein resides in the cytoplasm. The catalysed reaction is L-aspartate 4-semialdehyde + pyruvate = (2S,4S)-4-hydroxy-2,3,4,5-tetrahydrodipicolinate + H2O + H(+). It functions in the pathway amino-acid biosynthesis; L-lysine biosynthesis via DAP pathway; (S)-tetrahydrodipicolinate from L-aspartate: step 3/4. Catalyzes the condensation of (S)-aspartate-beta-semialdehyde [(S)-ASA] and pyruvate to 4-hydroxy-tetrahydrodipicolinate (HTPA). This is 4-hydroxy-tetrahydrodipicolinate synthase from Rickettsia peacockii (strain Rustic).